We begin with the raw amino-acid sequence, 73 residues long: Large ribosomal subunit protein uL30 (73 aa).

This sequence belongs to the universal ribosomal protein uL30 family. As to quaternary structure, part of the 50S ribosomal subunit.

The protein is Large ribosomal subunit protein uL30 of Borreliella afzelii (strain PKo) (Borrelia afzelii).